Here is a 118-residue protein sequence, read N- to C-terminus: UPF0102 protein Csac_2148 (118 aa).

It belongs to the UPF0102 family.

This Caldicellulosiruptor saccharolyticus (strain ATCC 43494 / DSM 8903 / Tp8T 6331) protein is UPF0102 protein Csac_2148.